The sequence spans 500 residues: Glucose-6-phosphate isomerase (500 aa).

Glutamate 332 acts as the Proton donor in catalysis. Active-site residues include histidine 363 and lysine 473.

Belongs to the GPI family.

It localises to the cytoplasm. The enzyme catalyses alpha-D-glucose 6-phosphate = beta-D-fructose 6-phosphate. The protein operates within carbohydrate biosynthesis; gluconeogenesis. It functions in the pathway carbohydrate degradation; glycolysis; D-glyceraldehyde 3-phosphate and glycerone phosphate from D-glucose: step 2/4. Its function is as follows. Catalyzes the reversible isomerization of glucose-6-phosphate to fructose-6-phosphate. This is Glucose-6-phosphate isomerase from Rhizorhabdus wittichii (strain DSM 6014 / CCUG 31198 / JCM 15750 / NBRC 105917 / EY 4224 / RW1) (Sphingomonas wittichii).